The primary structure comprises 102 residues: Small ribosomal subunit protein uS10 (102 aa).

This sequence belongs to the universal ribosomal protein uS10 family. Part of the 30S ribosomal subunit.

Functionally, involved in the binding of tRNA to the ribosomes. The polypeptide is Small ribosomal subunit protein uS10 (Akkermansia muciniphila (strain ATCC BAA-835 / DSM 22959 / JCM 33894 / BCRC 81048 / CCUG 64013 / CIP 107961 / Muc)).